Consider the following 546-residue polypeptide: CTP synthase (546 aa).

An amidoligase domain region spans residues 1–266 (MTKYIFVTGG…GDYLVERLGL (266 aa)). S13 provides a ligand contact to CTP. S13 provides a ligand contact to UTP. 14 to 19 (SVGKGI) provides a ligand contact to ATP. Position 54 (Y54) interacts with L-glutamine. ATP is bound at residue D71. Positions 71 and 141 each coordinate Mg(2+). CTP-binding positions include 148–150 (DIE), 187–192 (KTKPTQ), and K223. UTP is bound by residues 187-192 (KTKPTQ) and K223. Positions 291-533 (PIALVGKYVE…VAAAAQTLLA (243 aa)) constitute a Glutamine amidotransferase type-1 domain. G353 is an L-glutamine binding site. C380 (nucleophile; for glutamine hydrolysis) is an active-site residue. Residues 381 to 384 (LGMQ), E404, and R461 contribute to the L-glutamine site. Active-site residues include H506 and E508.

The protein belongs to the CTP synthase family. In terms of assembly, homotetramer.

The catalysed reaction is UTP + L-glutamine + ATP + H2O = CTP + L-glutamate + ADP + phosphate + 2 H(+). It carries out the reaction L-glutamine + H2O = L-glutamate + NH4(+). The enzyme catalyses UTP + NH4(+) + ATP = CTP + ADP + phosphate + 2 H(+). Its pathway is pyrimidine metabolism; CTP biosynthesis via de novo pathway; CTP from UDP: step 2/2. Its activity is regulated as follows. Allosterically activated by GTP, when glutamine is the substrate; GTP has no effect on the reaction when ammonia is the substrate. The allosteric effector GTP functions by stabilizing the protein conformation that binds the tetrahedral intermediate(s) formed during glutamine hydrolysis. Inhibited by the product CTP, via allosteric rather than competitive inhibition. Its function is as follows. Catalyzes the ATP-dependent amination of UTP to CTP with either L-glutamine or ammonia as the source of nitrogen. Regulates intracellular CTP levels through interactions with the four ribonucleotide triphosphates. In Chloroflexus aurantiacus (strain ATCC 29366 / DSM 635 / J-10-fl), this protein is CTP synthase.